Reading from the N-terminus, the 208-residue chain is Uracil phosphoribosyltransferase (208 aa).

5-phospho-alpha-D-ribose 1-diphosphate is bound by residues arginine 78, arginine 103, and 130 to 138; that span reads DPMFATGGT. Uracil is bound by residues isoleucine 193 and 198-200; that span reads GDA. Position 199 (aspartate 199) interacts with 5-phospho-alpha-D-ribose 1-diphosphate.

It belongs to the UPRTase family. Mg(2+) is required as a cofactor.

The enzyme catalyses UMP + diphosphate = 5-phospho-alpha-D-ribose 1-diphosphate + uracil. It functions in the pathway pyrimidine metabolism; UMP biosynthesis via salvage pathway; UMP from uracil: step 1/1. Allosterically activated by GTP. Catalyzes the conversion of uracil and 5-phospho-alpha-D-ribose 1-diphosphate (PRPP) to UMP and diphosphate. This is Uracil phosphoribosyltransferase from Campylobacter jejuni subsp. jejuni serotype O:2 (strain ATCC 700819 / NCTC 11168).